Consider the following 205-residue polypeptide: Methylthioribulose-1-phosphate dehydratase (205 aa).

Positions 96 and 98 each coordinate Zn(2+).

The protein belongs to the aldolase class II family. MtnB subfamily. Zn(2+) serves as cofactor.

It catalyses the reaction 5-(methylsulfanyl)-D-ribulose 1-phosphate = 5-methylsulfanyl-2,3-dioxopentyl phosphate + H2O. Its pathway is amino-acid biosynthesis; L-methionine biosynthesis via salvage pathway; L-methionine from S-methyl-5-thio-alpha-D-ribose 1-phosphate: step 2/6. Its function is as follows. Catalyzes the dehydration of methylthioribulose-1-phosphate (MTRu-1-P) into 2,3-diketo-5-methylthiopentyl-1-phosphate (DK-MTP-1-P). The sequence is that of Methylthioribulose-1-phosphate dehydratase from Pseudomonas aeruginosa (strain UCBPP-PA14).